Reading from the N-terminus, the 142-residue chain is Large ribosomal subunit protein uL13 (142 aa).

This sequence belongs to the universal ribosomal protein uL13 family. In terms of assembly, part of the 50S ribosomal subunit.

In terms of biological role, this protein is one of the early assembly proteins of the 50S ribosomal subunit, although it is not seen to bind rRNA by itself. It is important during the early stages of 50S assembly. The polypeptide is Large ribosomal subunit protein uL13 (Tolumonas auensis (strain DSM 9187 / NBRC 110442 / TA 4)).